Consider the following 547-residue polypeptide: MAAKDVVFGDAARAKMVEGVNILANAVKVTLGPKGRNVVLERSFGGPTVTKDGVSVAKEIELKDKLQNMGAQMVKEVASKTSDNAGDGTTTATVLAQSIVREGMKFVAAGMNPMDLKRGIDKAVAAAVEELKKVSKPTTTSKEIAQVGAISANSDTSIGERIAEAMDKVGKEGVITVEDGKSLADELEVVEGMQFDRGYLSPYFINNPEKQVVQLDNPFVLLFDKKISNIRDLLPVLEQVAKAGRPLLIVAEDVEGEALATLVVNNIRGILKTAAVKAPGFGDRRKAMLEDIAILTGGTVIAEEIGLTLEKAGLNDLGQAKRIEIGKENTIIIDGAGDAAAIEGRVKQIRAQIEEATSDYDREKLQERVAKLAGGVAVIKVGAATEVEMKEKKARVEDALHATRAAVEEGIVPGGGVALLRARAAISALTGENADQNAGIKIVLRAMEEPLRQIVLNAGEEASVVVAKVIEGKGNYGYNAASGEYGDLVEMGVLDPTKVTRTALQNAASVASLMLTTDCAVAESPKEESAPAMPGGMGGMGGMEGMM.

Residues 30-33 (TLGP), Lys-51, 87-91 (DGTTT), Gly-415, 479-481 (NAA), and Asp-495 contribute to the ATP site.

The protein belongs to the chaperonin (HSP60) family. Forms a cylinder of 14 subunits composed of two heptameric rings stacked back-to-back. Interacts with the co-chaperonin GroES.

Its subcellular location is the cytoplasm. The catalysed reaction is ATP + H2O + a folded polypeptide = ADP + phosphate + an unfolded polypeptide.. Its function is as follows. Together with its co-chaperonin GroES, plays an essential role in assisting protein folding. The GroEL-GroES system forms a nano-cage that allows encapsulation of the non-native substrate proteins and provides a physical environment optimized to promote and accelerate protein folding. The chain is Chaperonin GroEL from Cupriavidus necator (strain ATCC 17699 / DSM 428 / KCTC 22496 / NCIMB 10442 / H16 / Stanier 337) (Ralstonia eutropha).